Here is a 289-residue protein sequence, read N- to C-terminus: Palmitoyl-protein thioesterase 3 (289 aa).

An N-terminal signal peptide occupies residues 1–20 (MRILSSLILLIALAIALVSA). The active site involves S97. N189 and N195 each carry an N-linked (GlcNAc...) asparagine glycan. Residues D210 and H266 contribute to the active site. N-linked (GlcNAc...) asparagine glycosylation occurs at N281.

This sequence belongs to the palmitoyl-protein thioesterase family.

Its subcellular location is the lysosome. The enzyme catalyses S-hexadecanoyl-L-cysteinyl-[protein] + H2O = L-cysteinyl-[protein] + hexadecanoate + H(+). In terms of biological role, removes thioester-linked fatty acyl groups such as palmitate from modified cysteine residues in proteins or peptides during lysosomal degradation. In Dictyostelium discoideum (Social amoeba), this protein is Palmitoyl-protein thioesterase 3 (ppt3).